The primary structure comprises 87 residues: uncharacterized protein (87 aa).

The protein to A.fulgidus AF_0255 and AF_1348.

This is an uncharacterized protein from Archaeoglobus fulgidus (strain ATCC 49558 / DSM 4304 / JCM 9628 / NBRC 100126 / VC-16).